Reading from the N-terminus, the 557-residue chain is MSISGAVDEAGTPLLAVTVDYRNKPAVKSSSGGWRSAGFIIGVEVAERFAYYGISSNLITYLTGPLGQSTAAAAANVNAWSGTASLLPLLGAFVADSFLGRFRTILAASALYIVGLGVLTLSAMIPSDCKVSNLLSSCSPRFQVITFFSALYLVALAQGGHKPCVQAFGADQFDEKEPEECKAKSSFFNWWYFGMCFGTLTTLWVLNYIQDNLSWALGFGIPCIAMVVALVVLLLGTCTYRFSIRREDQSPFVRIGNVYVAAVKNWSVSALDVAAAEERLGLVSCSSSQQFSFLNKALVAKNGSCSIDELEEAKSVLRLAPIWLTCLVYAVVFAQSPTFFTKQGATMERSITPGYKISPATLQSFISLSIVIFIPIYDRVLIPIARSFTHKPGGITMLQRIGTGIFLSFLAMVVAALVEMKRLKTAADYGLVDSPDATVPMSVWWLVPQYVLFGITDVFAMVGLQEFFYDQVPNELRSVGLALYLSIFGIGNFLSSFMISIIEKATSQSGQASWFANNLNQAHLDYFYWLLACLSFIGLASYLYVAKSYVSKRLDTS.

2 helical membrane passes run 49-67 (FAYYGISSNLITYLTGPLG) and 79-99 (AWSGTASLLPLLGAFVADSFL). Phosphothreonine is present on Thr104. 10 helical membrane-spanning segments follow: residues 105-125 (ILAASALYIVGLGVLTLSAMI), 144-164 (VITFFSALYLVALAQGGHKPC), 186-206 (SFFNWWYFGMCFGTLTTLWVL), 215-235 (WALGFGIPCIAMVVALVVLLL), 320-340 (APIWLTCLVYAVVFAQSPTFF), 365-385 (FISLSIVIFIPIYDRVLIPIA), 401-421 (IGTGIFLSFLAMVVAALVEMK), 443-463 (VWWLVPQYVLFGITDVFAMVG), 479-499 (VGLALYLSIFGIGNFLSSFMI), and 526-546 (YFYWLLACLSFIGLASYLYVA).

This sequence belongs to the major facilitator superfamily. Proton-dependent oligopeptide transporter (POT/PTR) (TC 2.A.17) family. Expressed in shoots, roots and stems. Detected in leaves, flowers and siliques.

Its subcellular location is the membrane. The protein is Protein NRT1/ PTR FAMILY 5.10 (NPF5.10) of Arabidopsis thaliana (Mouse-ear cress).